The primary structure comprises 96 residues: Large ribosomal subunit protein uL23 (96 aa).

It belongs to the universal ribosomal protein uL23 family. In terms of assembly, part of the 50S ribosomal subunit. Contacts protein L29, and trigger factor when it is bound to the ribosome.

In terms of biological role, one of the early assembly proteins it binds 23S rRNA. One of the proteins that surrounds the polypeptide exit tunnel on the outside of the ribosome. Forms the main docking site for trigger factor binding to the ribosome. This Clostridioides difficile (strain 630) (Peptoclostridium difficile) protein is Large ribosomal subunit protein uL23.